Consider the following 115-residue polypeptide: Tyrosine-protein phosphatase 18 (115 aa).

The 115-residue stretch at 1-115 (WLMIVEQKCR…ETGSDAPMVV (115 aa)) folds into the Tyrosine-protein phosphatase domain. Aspartate 83 is a substrate binding site.

Belongs to the protein-tyrosine phosphatase family.

It catalyses the reaction O-phospho-L-tyrosyl-[protein] + H2O = L-tyrosyl-[protein] + phosphate. This chain is Tyrosine-protein phosphatase 18 (STY-18), found in Styela plicata (Wrinkled sea squirt).